A 613-amino-acid chain; its full sequence is Myrcene synthase, chloroplastic (613 aa).

The transit peptide at 1-46 (MQCMAVHQFAPLLSLLNCSRISSDFGRLFTPKTSTKSRSSTCHPIQ) directs the protein to the chloroplast. (2E)-geranyl diphosphate contacts are provided by arginine 324, aspartate 361, and aspartate 365. Mg(2+)-binding residues include aspartate 361 and aspartate 365. The short motif at 361–365 (DDIYD) is the DDXXD motif element. Residues 455–475 (IEMAWLSIGGPVILVHAYFCF) traverse the membrane as a helical segment. (2E)-geranyl diphosphate is bound by residues arginine 503 and aspartate 506. The Mg(2+) site is built by aspartate 506, threonine 510, and glutamate 514.

The protein belongs to the terpene synthase family. Tpsb subfamily. Mg(2+) is required as a cofactor. It depends on Mn(2+) as a cofactor. As to expression, expressed in trichomes.

The protein resides in the plastid. The protein localises to the chloroplast membrane. The enzyme catalyses (2E)-geranyl diphosphate = beta-myrcene + diphosphate. It participates in secondary metabolite biosynthesis; terpenoid biosynthesis. Functionally, monoterpene synthase that catalyzes the formation of myrcene. Can use geranyl diphosphate as substrate, but not farnesyl diphosphate or geranylgeranyl diphosphate. The polypeptide is Myrcene synthase, chloroplastic (Humulus lupulus (European hop)).